A 141-amino-acid chain; its full sequence is Hemoglobin subunit beta-C (141 aa).

The region spanning 1-141 (PNKALITGFW…VASALAHRYH (141 aa)) is the Globin domain. Residues His-58 and His-87 each coordinate heme b.

The protein belongs to the globin family. In terms of assembly, heterotetramer of two alpha chains and two beta chains. Red blood cells.

In terms of biological role, involved in oxygen transport from the lung to the various peripheral tissues. The chain is Hemoglobin subunit beta-C from Ammotragus lervia (Barbary sheep).